The sequence spans 146 residues: Basic phospholipase A2 paradoxin-like alpha chain (146 aa).

The N-terminal stretch at 1 to 27 (MHPAHLLVLLAVCVSLLGASDIPPLPL) is a signal peptide. 7 disulfide bridges follow: cysteine 38–cysteine 99, cysteine 54–cysteine 145, cysteine 56–cysteine 72, cysteine 71–cysteine 126, cysteine 78–cysteine 119, cysteine 88–cysteine 112, and cysteine 106–cysteine 117. Ca(2+)-binding residues include tyrosine 55, glycine 57, and glycine 59. Histidine 75 is a catalytic residue. Ca(2+) is bound at residue aspartate 76. Residue aspartate 120 is part of the active site.

The protein belongs to the phospholipase A2 family. Group I subfamily. D49 sub-subfamily. In terms of assembly, heterotrimer of alpha, beta, and gamma chains; non-covalently linked. It depends on Ca(2+) as a cofactor. In terms of tissue distribution, expressed by the venom gland.

The protein resides in the secreted. It catalyses the reaction a 1,2-diacyl-sn-glycero-3-phosphocholine + H2O = a 1-acyl-sn-glycero-3-phosphocholine + a fatty acid + H(+). Heterotrimer: Snake venom phospholipase A2 (PLA2) heterotrimer that acts as a potent presynaptic neurotoxin by blocking synaptic transmission and synaptic vesicle recycling. May act by binding in a calcium-dependent fashion to neurotonal pentraxin-1 (NPTX1) and neurotonal pentraxin-2 (NPTX2), but not to neuronal pentraxin receptor (NPTXR). Also binds to taipoxin-associated calcium binding protein 49 (RCN2), a protein localized in the lumen of endoplasmic reticulum. Its function is as follows. Monomer (alpha chain): Snake venom phospholipase A2 (PLA2) alpha chain that possesses the same high enzymatic activity than the heterotrimer. PLA2 catalyzes the calcium-dependent hydrolysis of the 2-acyl groups in 3-sn-phosphoglycerides. This is Basic phospholipase A2 paradoxin-like alpha chain from Oxyuranus microlepidotus (Inland taipan).